Consider the following 500-residue polypeptide: Sodium/potassium/calcium exchanger 5 (500 aa).

An N-terminal signal peptide occupies residues 1 to 29 (MQTKGGQTWARRALLLGILWATAHLPLSG). Residues 30 to 66 (TSLPQRLPRATGNSTQCVISPSSEFPEGFFTRQERRD) are Extracellular-facing. The chain crosses the membrane as a helical span at residues 67-87 (GGIIIYFLIIVYMFMAISIVC). Topologically, residues 88–111 (DEYFLPSLEIISESLGLSQDVAGT) are cytoplasmic. The helical transmembrane segment at 112–132 (TFMAAGSSAPELVTAFLGVFI) threads the bilayer. At 133–136 (TKGD) the chain is on the extracellular side. A helical transmembrane segment spans residues 137-157 (IGISTILGSAIYNLLGICAAC). Over 158 to 169 (GLLSNTVSTLSC) the chain is Cytoplasmic. The chain crosses the membrane as a helical span at residues 170–190 (WPLFRDCAAYTISAAAVLGII). At 191-195 (YDNQV) the chain is on the extracellular side. Residues 196–216 (YWYEGALLLLIYGLYVLVLCF) form a helical membrane-spanning segment. At 217–302 (DIKINQYIIK…PSVFNMPEAD (86 aa)) the chain is on the cytoplasmic side. A helical membrane pass occupies residues 303 to 323 (LKRIFWVLSLPIITLLFLTTP). Over 324 to 333 (DCRKKFWKNY) the chain is Extracellular. Residues 334 to 354 (FVITFFMSAIWISAFTYILVW) traverse the membrane as a helical segment. The Cytoplasmic portion of the chain corresponds to 355 to 368 (MVTITGETLEIPDT). The helical transmembrane segment at 369–389 (VMGLTLLAAGTSIPDTIASVL) threads the bilayer. The Extracellular portion of the chain corresponds to 390–399 (VARKGKGDMA). A helical transmembrane segment spans residues 400-420 (MSNIVGSNVFDMLCLGIPWFI). Residues 421–437 (KTAFINGSAPAEVNSRG) are Cytoplasmic-facing. A helical membrane pass occupies residues 438-458 (LTYITISLNISIIFLFLAVHF). The Extracellular portion of the chain corresponds to 459–468 (NGWKLDRKLG). The helical transmembrane segment at 469 to 489 (IVCLLSYLGLATLSVLYELGI) threads the bilayer. Residues 490 to 500 (IGNNKIRGCGG) are Cytoplasmic-facing.

Belongs to the Ca(2+):cation antiporter (CaCA) (TC 2.A.19) family. SLC24A subfamily.

It is found in the golgi apparatus. It localises to the trans-Golgi network membrane. Its subcellular location is the melanosome. It catalyses the reaction Ca(2+)(out) + K(+)(out) + 4 Na(+)(in) = Ca(2+)(in) + K(+)(in) + 4 Na(+)(out). In terms of biological role, calcium, potassium:sodium antiporter that transports 1 Ca(2+) and 1 K(+) to the melanosome in exchange for 4 cytoplasmic Na(+). Involved in pigmentation, possibly by participating in ion transport in melanosomes. Predominant sodium-calcium exchanger in melanocytes. The chain is Sodium/potassium/calcium exchanger 5 from Homo sapiens (Human).